A 274-amino-acid polypeptide reads, in one-letter code: MAD2L1-binding protein (274 aa).

The interaction with MAD2L1 stretch occupies residues Ala-45–Lys-78. Ser-102 carries the phosphoserine modification.

Belongs to the MAD2L1BP family. Interacts with MAD2L1.

It localises to the nucleus. It is found in the cytoplasm. The protein resides in the cytoskeleton. Its subcellular location is the spindle. Its function is as follows. May function to silence the spindle checkpoint and allow mitosis to proceed through anaphase by binding MAD2L1 after it has become dissociated from the MAD2L1-CDC20 complex. This is MAD2L1-binding protein (MAD2L1BP) from Homo sapiens (Human).